We begin with the raw amino-acid sequence, 94 residues long: MKNQEESGWQAFLTLCSKMQKEKFLQDLFSLFLSFGERKDVASRYHIIRALLEGELTQREIAEKYGVSIAQITRGSNALKGSDPQFKEFLQKEI.

The DNA-binding element occupies 58–81; that stretch reads QREIAEKYGVSIAQITRGSNALKG.

The protein belongs to the TrpR family. Homodimer.

The protein resides in the cytoplasm. Its function is as follows. This protein is an aporepressor. When complexed with L-tryptophan it binds the operator region of the trp operon and prevents the initiation of transcription. In Chlamydia trachomatis serovar L2 (strain ATCC VR-902B / DSM 19102 / 434/Bu), this protein is Trp operon repressor homolog.